Reading from the N-terminus, the 398-residue chain is Sex hormone-binding globulin (398 aa).

Positions 1–31 (MATPPLVPLLLLLLLLLPHAHHRLALRSVLA) are cleaved as a signal peptide. 2 consecutive Laminin G-like domains span residues 41–213 (VHLI…RRSC) and 220–386 (GIFF…THSC). 2 disulfide bridges follow: cysteine 189-cysteine 213 and cysteine 358-cysteine 386. N-linked (GlcNAc...) asparagine glycans are attached at residues asparagine 376 and asparagine 392.

In terms of assembly, homodimer.

It localises to the secreted. Functions as an androgen transport protein, but may also be involved in receptor mediated processes. Each dimer binds one molecule of steroid. Specific for 5-alpha-dihydrotestosterone, testosterone, and 17-beta-estradiol. Regulates the plasma metabolic clearance rate of steroid hormones by controlling their plasma concentration. In Oryctolagus cuniculus (Rabbit), this protein is Sex hormone-binding globulin (SHBG).